We begin with the raw amino-acid sequence, 122 residues long: Glycine cleavage system H protein (122 aa).

A Lipoyl-binding domain is found at 19 to 101 (VATVGITDYA…QGKAWFFKIK (83 aa)). N6-lipoyllysine is present on Lys60.

It belongs to the GcvH family. As to quaternary structure, the glycine cleavage system is composed of four proteins: P, T, L and H. The cofactor is (R)-lipoate.

Functionally, the glycine cleavage system catalyzes the degradation of glycine. The H protein shuttles the methylamine group of glycine from the P protein to the T protein. The chain is Glycine cleavage system H protein from Bradyrhizobium diazoefficiens (strain JCM 10833 / BCRC 13528 / IAM 13628 / NBRC 14792 / USDA 110).